The following is a 70-amino-acid chain: Large ribosomal subunit protein bL31 (70 aa).

Zn(2+)-binding residues include cysteine 16, cysteine 18, cysteine 37, and cysteine 40.

This sequence belongs to the bacterial ribosomal protein bL31 family. Type A subfamily. Part of the 50S ribosomal subunit. Requires Zn(2+) as cofactor.

Its function is as follows. Binds the 23S rRNA. This is Large ribosomal subunit protein bL31 from Saccharophagus degradans (strain 2-40 / ATCC 43961 / DSM 17024).